The chain runs to 182 residues: UPF0397 protein BCE_2667 (182 aa).

5 consecutive transmembrane segments (helical) span residues 9–29 (VVAIGIGAALYGILGLWGFSI), 40–60 (AILTIFGALFGPVAGLLIGLI), 71–91 (WGIWWGWVFSSGIIGFAMGLI), 114–134 (ITGLIGIVIAIIFAGAFDIIV), and 142–162 (IVIQVLGATIADVIVFLVLGL).

This sequence belongs to the UPF0397 family.

Its subcellular location is the cell membrane. The polypeptide is UPF0397 protein BCE_2667 (Bacillus cereus (strain ATCC 10987 / NRS 248)).